Consider the following 358-residue polypeptide: MFERLEQIETRYEELGREMADPALIADQQKYQKTAKQHRELEDVVEKFREYREVQNGIADARGMMNEADAEIRAMAEEELASLEERLPQIEADLKLLLLPKDPNDEKNVVVEIRAGTGGDEASLFAAEVFRMYARYAEQRRWKVEVLSMSESSVGGAKEVIAIIEGDHVYSQMKYESGVHRVQRVPATETQGRVHTSAITVAVLPEAEEVDVKIEAKDLRIDTFCSSGPGGQSVNTTYSAVRITHLPTNTVVSCQDEKSQIKNREKAMRVLRSRLYEVEMERQQQALAKERKQQVGSGDRSEKIRTYNFPQNRLTDHRIGLTIHQLAEVMEGRLQPVIDALTAHFNAERLKAESEAVA.

Q232 is modified (N5-methylglutamine).

This sequence belongs to the prokaryotic/mitochondrial release factor family. Post-translationally, methylated by PrmC. Methylation increases the termination efficiency of RF1.

It localises to the cytoplasm. Its function is as follows. Peptide chain release factor 1 directs the termination of translation in response to the peptide chain termination codons UAG and UAA. This Acidobacterium capsulatum (strain ATCC 51196 / DSM 11244 / BCRC 80197 / JCM 7670 / NBRC 15755 / NCIMB 13165 / 161) protein is Peptide chain release factor 1.